Reading from the N-terminus, the 99-residue chain is MNPVNYLYLAALLFAIGASGVLVRRNAIVVFMCVELMLNACNLALVTFSRMHGNLDGQIVAFFTMVVAAAEVVVGLAIIVSLFRSRHSASVDDASLMKL.

3 consecutive transmembrane segments (helical) span residues 3–23 (PVNY…GVLV), 28–48 (IVVF…LVTF), and 59–79 (IVAF…LAII).

This sequence belongs to the complex I subunit 4L family. As to quaternary structure, NDH-1 is composed of 14 different subunits. Subunits NuoA, H, J, K, L, M, N constitute the membrane sector of the complex.

The protein localises to the cell membrane. The enzyme catalyses a quinone + NADH + 5 H(+)(in) = a quinol + NAD(+) + 4 H(+)(out). Its function is as follows. NDH-1 shuttles electrons from NADH, via FMN and iron-sulfur (Fe-S) centers, to quinones in the respiratory chain. The immediate electron acceptor for the enzyme in this species is believed to be a menaquinone. Couples the redox reaction to proton translocation (for every two electrons transferred, four hydrogen ions are translocated across the cytoplasmic membrane), and thus conserves the redox energy in a proton gradient. This is NADH-quinone oxidoreductase subunit K 1 from Streptomyces griseus subsp. griseus (strain JCM 4626 / CBS 651.72 / NBRC 13350 / KCC S-0626 / ISP 5235).